The sequence spans 649 residues: Nitrosuccinic acid synthase npaA (649 aa).

Belongs to the nitrosuccinic acid synthase family. The cofactor is FAD.

The catalysed reaction is L-aspartate + 3 NADPH + 3 O2 + 2 H(+) = 2-nitrobutanedioate + 3 NADP(+) + 4 H2O. The protein operates within mycotoxin biosynthesis. Nitrosuccinic acid synthase; part of the gene cluster that mediates the biosynthesis of the deadly neurotoxic nitroalkane 3-nitropropanoic acid (3-NPA) that acts as an antimetabolite of succinate and irreversibly inhibits succinate dehydrogenase and disrupts mitochondrial oxidative phosphorylation. NpaA catalyzes the iterative oxidation of L-aspartic acid to nitrosuccinic acid (2-nitrobutanedioate). Alternative amino acid substrates such as L-glutamate and D-aspartate are not accepted by npaA as a substrate, showing the strict substrate specificity toward L-aspartate. The nitrosuccinic acid decarboxylase npaB then facilitates decarboxylation of Nitrosuccinic acid to produce 3-NPA. This is Nitrosuccinic acid synthase npaA from Aspergillus oryzae (strain ATCC 42149 / RIB 40) (Yellow koji mold).